A 148-amino-acid polypeptide reads, in one-letter code: 3-dehydroquinate dehydratase (148 aa).

Tyrosine 23 serves as the catalytic Proton acceptor. Residues asparagine 75, histidine 81, and aspartate 88 each coordinate substrate. Histidine 101 functions as the Proton donor in the catalytic mechanism. Substrate contacts are provided by residues 102 to 103 (LS) and arginine 112.

It belongs to the type-II 3-dehydroquinase family. Homododecamer.

It catalyses the reaction 3-dehydroquinate = 3-dehydroshikimate + H2O. Its pathway is metabolic intermediate biosynthesis; chorismate biosynthesis; chorismate from D-erythrose 4-phosphate and phosphoenolpyruvate: step 3/7. In terms of biological role, catalyzes a trans-dehydration via an enolate intermediate. This chain is 3-dehydroquinate dehydratase, found in Ectopseudomonas mendocina (strain ymp) (Pseudomonas mendocina).